A 1365-amino-acid chain; its full sequence is Histone-lysine N-methyltransferase NSD2 (1365 aa).

2 positions are modified to phosphothreonine: T110 and T114. Residue S121 is modified to Phosphoserine. The segment at 149–170 (ADVSQSEENGQKPENKARRNRK) is disordered. Residue S172 is modified to Phosphoserine. The PWWP 1 domain occupies 222-286 (VGDLVWSKVS…FEKSLVAFEG (65 aa)). The residue at position 376 (S376) is a Phosphoserine. 2 disordered regions span residues 376–455 (SSGV…RKGD) and 516–658 (EDSG…SKKS). T422 is modified (phosphothreonine). A DNA-binding region (HMG box) is located at residues 453–521 (KGDAASQFLV…VQAEEDSGNV (69 aa)). A Phosphothreonine modification is found at T544. The span at 552 to 567 (DKHSLRKRDTITDKTA) shows a compositional bias: basic and acidic residues. Polar residues predominate over residues 580-590 (SLKSQAATKNL). Positions 606–622 (AASSALGFSKSSSPSAS) are enriched in low complexity. Phosphoserine is present on S614. Residues 632-648 (PGDEPSESPYESADETQ) are compositionally biased toward acidic residues. PHD-type zinc fingers lie at residues 667 to 713 (EYVC…CASG), 714 to 770 (IHSC…CHAS), and 831 to 875 (VSWC…CRAG). Residues 880–942 (FQDIIWVKLG…QARVFPYMEG (63 aa)) enclose the PWWP 2 domain. An AWS domain is found at 1011 to 1061 (SEIPKCNCKPTDENPCGFDSECLNRMLMFECHPQVCPAGEFCQNQCFTKRQ). The Zn(2+) site is built by C1016, C1018, C1026, C1032, C1041, C1046, and C1052. The region spanning 1063-1180 (PETKIIKTDG…AGTELTFNYN (118 aa)) is the SET domain. S-adenosyl-L-methionine is bound by residues W1075, 1115-1118 (THFY), and 1141-1142 (NH). C1144 is a Zn(2+) binding site. Residue N1186 coordinates S-adenosyl-L-methionine. A Post-SET domain is found at 1187–1203 (EKTVCRCGASNCSGFLG). Zn(2+) is bound at residue C1191. R1192 contacts S-adenosyl-L-methionine. Zn(2+) contacts are provided by C1193 and C1198. Positions 1207–1232 (KTSTTLSSEEKGKKTKKKTRRRRAKG) are disordered. Residues 1219 to 1230 (KKTKKKTRRRRA) show a composition bias toward basic residues. The PHD-type 4; atypical zinc-finger motif lies at 1239–1286 (EDECFRCGDGGQLVLCDRKFCTKAYHLSCLGLGKRPFGKWECPWHHCD). The segment at 1333-1365 (VRSTKTEKPPPEPGKPKGKRRRRRGWRRVTEGK) is disordered. The span at 1348–1359 (PKGKRRRRRGWR) shows a compositional bias: basic residues.

This sequence belongs to the class V-like SAM-binding methyltransferase superfamily. Histone-lysine methyltransferase family. SET2 subfamily. Interacts with HDAC1. Interacts (via PHD-type zinc fingers 1, 2 and 3) with SALL1. Interacts (via PHD-type 1, 2 and 3) with SALL4. Interacts with NANOG. Interacts with OGT. Interacts (via HMG box) with NKX2-5. Widely expressed. Predominantly expressed in thymus and testis.

It localises to the nucleus. The protein localises to the chromosome. It is found in the cytoplasm. The protein resides in the nucleolus. The catalysed reaction is L-lysyl(36)-[histone H3] + S-adenosyl-L-methionine = N(6)-methyl-L-lysyl(36)-[histone H3] + S-adenosyl-L-homocysteine + H(+). It catalyses the reaction L-lysyl(36)-[histone H3] + 2 S-adenosyl-L-methionine = N(6),N(6)-dimethyl-L-lysyl(36)-[histone H3] + 2 S-adenosyl-L-homocysteine + 2 H(+). Its function is as follows. Histone methyltransferase which specifically dimethylates nucleosomal histone H3 at 'Lys-36' (H3K36me2). Also monomethylates nucleosomal histone H3 at 'Lys-36' (H3K36me) in vitro. Does not trimethylate nucleosomal histone H3 at 'Lys-36' (H3K36me3). However, specifically trimethylates histone H3 at 'Lys-36' (H3K36me3) at euchromatic regions in embryonic stem (ES) cells. By methylating histone H3 at 'Lys-36', involved in the regulation of gene transcription during various biological processes. In ES cells, associates with developmental transcription factors such as SALL1 and represses inappropriate gene transcription mediated by histone deacetylation. During heart development, associates with transcription factor NKX2-5 to repress transcription of NKX2-5 target genes. Plays an essential role in adipogenesis, by regulating expression of genes involved in pre-adipocyte differentiation. During T-cell receptor (TCR) and CD28-mediated T-cell activation, promotes the transcription of transcription factor BCL6 which is required for follicular helper T (Tfh) cell differentiation. During B-cell development, required for the generation of the B1 lineage. During B2 cell activation, may contribute to the control of isotype class switch recombination (CRS), splenic germinal center formation, and the humoral immune response. Plays a role in class switch recombination of the immunoglobulin heavy chain (IgH) locus during B-cell activation. By regulating the methylation of histone H3 at 'Lys-36' and histone H4 at 'Lys-20' at the IgH locus, involved in TP53BP1 recruitment to the IgH switch region and promotes the transcription of IgA. Functionally, histone methyltransferase which specifically dimethylates nucleosomal histone H3 at 'Lys-36' (H3K36me2). Histone methyltransferase which specifically dimethylates nucleosomal histone H3 at 'Lys-36' (H3K36me2). Methylation of histone H3 at 'Lys-27' is controversial. Mono-, di- or tri-methylates histone H3 at 'Lys-27' (H3K27me, H3K27me2 and H3K27me3). Does not methylate histone H3 at 'Lys-27'. May act as a transcription regulator that binds DNA and suppresses IL5 transcription through HDAC recruitment. The polypeptide is Histone-lysine N-methyltransferase NSD2 (Homo sapiens (Human)).